A 223-amino-acid polypeptide reads, in one-letter code: Membrane protein (223 aa).

Over 1-18 (MAENCTLDSEQAVLLFKE) the chain is Virion surface. The chain crosses the membrane as a helical span at residues 19–39 (YNLFITAFLLFLTILLQYGYA). The Intravirion portion of the chain corresponds to 40-49 (TRSRTIYILK). The helical transmembrane segment at 50–70 (MIVLWCFWPLNIAVGVISCIY) threads the bilayer. Residues 71 to 75 (PPNTG) lie on the Virion surface side of the membrane. Residues 76–96 (GLVAAIILTVFACLSFVGYWI) form a helical membrane-spanning segment. Over 97–223 (QSCRLFKRCR…VATGGSSLYT (127 aa)) the chain is Intravirion.

Belongs to the gammacoronaviruses M protein family. Homomultimer. Interacts with envelope E protein in the budding compartment of the host cell, which is located between endoplasmic reticulum and the Golgi complex. Forms a complex with HE and S proteins. Interacts with nucleocapsid N protein. This interaction probably participates in RNA packaging into the virus.

It localises to the virion membrane. Its subcellular location is the host Golgi apparatus membrane. Component of the viral envelope that plays a central role in virus morphogenesis and assembly via its interactions with other viral proteins. The protein is Membrane protein of Gallus gallus (Chicken).